The following is a 729-amino-acid chain: Fatty acid oxidation complex subunit alpha (729 aa).

Residues 1–189 form an enoyl-CoA hydratase/isomerase region; it reads MLYKGDTLYL…KIGLVDGVVK (189 aa). Aspartate 296 serves as a coordination point for substrate. Residues 311–729 are 3-hydroxyacyl-CoA dehydrogenase; the sequence is ETPKQAAVLG…ARPVGDLKTA (419 aa). Residues methionine 324, aspartate 343, 400-402, lysine 407, and serine 429 contribute to the NAD(+) site; that span reads VVE. The For 3-hydroxyacyl-CoA dehydrogenase activity role is filled by histidine 450. Asparagine 453 contacts NAD(+). Substrate is bound by residues asparagine 500 and tyrosine 660. The disordered stretch occupies residues 708-729; it reads RHNEPYYPPVEPARPVGDLKTA.

In the N-terminal section; belongs to the enoyl-CoA hydratase/isomerase family. The protein in the C-terminal section; belongs to the 3-hydroxyacyl-CoA dehydrogenase family. Heterotetramer of two alpha chains (FadB) and two beta chains (FadA).

The catalysed reaction is a (3S)-3-hydroxyacyl-CoA + NAD(+) = a 3-oxoacyl-CoA + NADH + H(+). It carries out the reaction a (3S)-3-hydroxyacyl-CoA = a (2E)-enoyl-CoA + H2O. The enzyme catalyses a 4-saturated-(3S)-3-hydroxyacyl-CoA = a (3E)-enoyl-CoA + H2O. It catalyses the reaction (3S)-3-hydroxybutanoyl-CoA = (3R)-3-hydroxybutanoyl-CoA. The catalysed reaction is a (3Z)-enoyl-CoA = a 4-saturated (2E)-enoyl-CoA. It carries out the reaction a (3E)-enoyl-CoA = a 4-saturated (2E)-enoyl-CoA. The protein operates within lipid metabolism; fatty acid beta-oxidation. Involved in the aerobic and anaerobic degradation of long-chain fatty acids via beta-oxidation cycle. Catalyzes the formation of 3-oxoacyl-CoA from enoyl-CoA via L-3-hydroxyacyl-CoA. It can also use D-3-hydroxyacyl-CoA and cis-3-enoyl-CoA as substrate. This chain is Fatty acid oxidation complex subunit alpha, found in Shigella flexneri serotype 5b (strain 8401).